A 213-amino-acid polypeptide reads, in one-letter code: Uridine kinase (213 aa).

15–22 (GASASGKS) is an ATP binding site.

The protein belongs to the uridine kinase family.

Its subcellular location is the cytoplasm. It catalyses the reaction uridine + ATP = UMP + ADP + H(+). The catalysed reaction is cytidine + ATP = CMP + ADP + H(+). It functions in the pathway pyrimidine metabolism; CTP biosynthesis via salvage pathway; CTP from cytidine: step 1/3. It participates in pyrimidine metabolism; UMP biosynthesis via salvage pathway; UMP from uridine: step 1/1. The polypeptide is Uridine kinase (Yersinia pseudotuberculosis serotype O:1b (strain IP 31758)).